Consider the following 717-residue polypeptide: Serine/threonine-protein kinase STE11 (717 aa).

The region spanning 20 to 84 (NDLPFVQLFL…LRKSKSFQRD (65 aa)) is the SAM domain. Residue Ser-323 is modified to Phosphoserine. The 298-residue stretch at 415–712 (WLKGACIGSG…ALELLQHPWL (298 aa)) folds into the Protein kinase domain. ATP is bound by residues 421-429 (IGSGSFGSV) and Lys-444. A compositionally biased stretch (polar residues) spans 452 to 466 (NIGVPTDNNKQANSD). The interval 452-481 (NIGVPTDNNKQANSDENNEQEEQQEKIEDV) is disordered. Residue Ser-465 is modified to Phosphoserine. Asp-579 acts as the Proton acceptor in catalysis.

The protein belongs to the protein kinase superfamily. STE Ser/Thr protein kinase family. MAP kinase kinase kinase subfamily. In terms of assembly, homodimer. Interacts (via SAM domain) with STE50 (via SAM domain). Interacts with PBS2 and SHO1.

The enzyme catalyses L-seryl-[protein] + ATP = O-phospho-L-seryl-[protein] + ADP + H(+). The catalysed reaction is L-threonyl-[protein] + ATP = O-phospho-L-threonyl-[protein] + ADP + H(+). In terms of biological role, serine/threonine protein kinase required for cell-type-specific transcription and signal transduction in yeast. It is thought that it phosphorylates the STE7 protein kinase which itself, phosphorylates the FUS3 and or KSS1 kinases. The polypeptide is Serine/threonine-protein kinase STE11 (STE11) (Saccharomyces cerevisiae (strain ATCC 204508 / S288c) (Baker's yeast)).